The chain runs to 466 residues: 3-isopropylmalate dehydratase large subunit (466 aa).

[4Fe-4S] cluster is bound by residues Cys-347, Cys-407, and Cys-410.

Belongs to the aconitase/IPM isomerase family. LeuC type 1 subfamily. Heterodimer of LeuC and LeuD. The cofactor is [4Fe-4S] cluster.

It carries out the reaction (2R,3S)-3-isopropylmalate = (2S)-2-isopropylmalate. It participates in amino-acid biosynthesis; L-leucine biosynthesis; L-leucine from 3-methyl-2-oxobutanoate: step 2/4. Functionally, catalyzes the isomerization between 2-isopropylmalate and 3-isopropylmalate, via the formation of 2-isopropylmaleate. The chain is 3-isopropylmalate dehydratase large subunit from Escherichia fergusonii (strain ATCC 35469 / DSM 13698 / CCUG 18766 / IAM 14443 / JCM 21226 / LMG 7866 / NBRC 102419 / NCTC 12128 / CDC 0568-73).